Consider the following 393-residue polypeptide: Ig gamma-1 chain C region, membrane-bound form (393 aa).

The tract at residues 1-97 (AKTTPPSVYP…ASSTKVDKKI (97 aa)) is CH1. C27 and C82 are disulfide-bonded. The tract at residues 98 to 110 (VPRDCGCKPCICT) is hinge. The interval 111-217 (VPEVSSVFIF…PIEKTISKTK (107 aa)) is CH2. Disulfide bonds link C138–C198 and C244–C302. A glycan (N-linked (GlcNAc...) asparagine) is linked at N174. The tract at residues 218–324 (GRPKAPQVYT…EKSLSHSPGL (107 aa)) is CH3. The chain crosses the membrane as a helical span at residues 340 to 357 (GLWTTITIFISLFLLSVC). Topologically, residues 358–393 (YSAAVTLFKVKWIFSSVVELKQTLVPEYKNMIGQAP) are cytoplasmic.

The protein resides in the cell membrane. In Mus musculus (Mouse), this protein is Ig gamma-1 chain C region, membrane-bound form (Ighg1).